A 398-amino-acid chain; its full sequence is MMDERKLSNFQIDGEKAYTGSSQGNSYLEDRQKRQNTFTKRKAGIFKKANELALLTGSEVMVLVVSETGLVHTFSTPKLENVVKSPEGQKLITESLINATTDQNESQASQAKQSSAQLSDSESGYPLDHEEMRISEENGPSHIENLNFFSDIDNFSKTSAEEIASKLFSSVSPTHETLQFDHGLQNLEGFQANEHPEMFADHSIDFYNSNNVDIPALSMLTSQTSSSSTLNLPPEPASREVKIFPKQGKRIFSPSTGIDYETTGQHSVNSPPSTYKHRRSLNKSFATRSEPQTPRKNKIRDSLQSSPLNFPPRDRPPLIPISRIAVPSTIETEERQYRGNQKIINFYAKIFEPNSGLGTSSEGASSSFPDVDPNLAQNGVPYYSLPDIDHNQFDHLRR.

3 disordered regions span residues Met-1–Asp-30, Thr-101–Tyr-125, and Pro-254–Pro-317. The MADS-box domain maps to Gly-20–Phe-74. A compositionally biased stretch (low complexity) spans Ser-106–Ser-121. Polar residues-rich tracts occupy residues Thr-262–Ser-273 and Asn-282–Pro-294.

The protein localises to the nucleus. Functionally, in response to mating-pheromone signaling or nitrogen starvation, it interacts with mat1-Pc. This activates the expression of one of two mating-type-specific genes sxa2 or map3, which leads to inactivation of the P-factor. May also interact with mat1-Mc. The protein is Pheromone receptor transcription activator (map1) of Schizosaccharomyces pombe (strain 972 / ATCC 24843) (Fission yeast).